A 185-amino-acid polypeptide reads, in one-letter code: Elongation factor P (185 aa).

It belongs to the elongation factor P family.

The protein localises to the cytoplasm. It participates in protein biosynthesis; polypeptide chain elongation. Involved in peptide bond synthesis. Stimulates efficient translation and peptide-bond synthesis on native or reconstituted 70S ribosomes in vitro. Probably functions indirectly by altering the affinity of the ribosome for aminoacyl-tRNA, thus increasing their reactivity as acceptors for peptidyl transferase. The chain is Elongation factor P from Lachnoclostridium phytofermentans (strain ATCC 700394 / DSM 18823 / ISDg) (Clostridium phytofermentans).